Here is a 332-residue protein sequence, read N- to C-terminus: Ribosomal RNA small subunit methyltransferase H (332 aa).

Residues 39-41 (GGY), aspartate 56, phenylalanine 83, aspartate 100, and glutamine 107 contribute to the S-adenosyl-L-methionine site.

Belongs to the methyltransferase superfamily. RsmH family.

Its subcellular location is the cytoplasm. It carries out the reaction cytidine(1402) in 16S rRNA + S-adenosyl-L-methionine = N(4)-methylcytidine(1402) in 16S rRNA + S-adenosyl-L-homocysteine + H(+). In terms of biological role, specifically methylates the N4 position of cytidine in position 1402 (C1402) of 16S rRNA. The sequence is that of Ribosomal RNA small subunit methyltransferase H from Bartonella tribocorum (strain CIP 105476 / IBS 506).